The following is a 331-amino-acid chain: Beta-ketoacyl-[acyl-carrier-protein] synthase III (331 aa).

Residues Cys115 and His255 contribute to the active site. The interval 256–260 is ACP-binding; the sequence is QANFR. Asn285 is an active-site residue.

The protein belongs to the thiolase-like superfamily. FabH family. In terms of assembly, homodimer.

It is found in the cytoplasm. It carries out the reaction malonyl-[ACP] + acetyl-CoA + H(+) = 3-oxobutanoyl-[ACP] + CO2 + CoA. The protein operates within lipid metabolism; fatty acid biosynthesis. Its function is as follows. Catalyzes the condensation reaction of fatty acid synthesis by the addition to an acyl acceptor of two carbons from malonyl-ACP. Catalyzes the first condensation reaction which initiates fatty acid synthesis and may therefore play a role in governing the total rate of fatty acid production. Possesses both acetoacetyl-ACP synthase and acetyl transacylase activities. Its substrate specificity determines the biosynthesis of branched-chain and/or straight-chain of fatty acids. The chain is Beta-ketoacyl-[acyl-carrier-protein] synthase III from Helicobacter pylori (strain J99 / ATCC 700824) (Campylobacter pylori J99).